The sequence spans 295 residues: Trimeric intracellular cation channel type A (295 aa).

At 1-11 (MELLSALSLDD) the chain is on the lumenal side. A helical membrane pass occupies residues 12 to 32 (LAVAFSKLPVFPLFDVAYYII). Over 33–51 (SILYLKYEPGAVDLSKRSP) the chain is Cytoplasmic. The chain crosses the membrane as a helical span at residues 52-72 (VASWLCAMLYCFGSYILADVL). Topologically, residues 73–84 (LGESPIHYFSNN) are lumenal. Residue Gly-74 coordinates Ca(2+). Residues 85 to 105 (ANILLASAVWYLTFFCPLNIF) form a helical membrane-spanning segment. Residues 106-144 (YKIVSFLPLKLVLVGMKEVVRVRKIAMGIHHAHHHYHHG) are Cytoplasmic-facing. Residues Lys-122 and Arg-126 each contribute to the a 1,2-diacyl-sn-glycero-3-phospho-(1D-myo-inositol-4,5-bisphosphate) site. The helical transmembrane segment at 145-165 (WVIMVLIGWVKGSGVALMSNL) threads the bilayer. Over 166-178 (EQLLRGVWKPETN) the chain is Lumenal. A helical transmembrane segment spans residues 179 to 199 (EILHMSFPTKASLYGAILFTL). The Cytoplasmic portion of the chain corresponds to 200 to 201 (QQ). Residues 202 to 222 (AHWLPISKAYLIFFFTLFMAI) traverse the membrane as a helical segment. Residues 223-233 (CKIYMTATHSH) are Lumenal-facing. A helical transmembrane segment spans residues 234–254 (GSPFAIFESGICCVLFGAANG). At 255-295 (DHDDHGDHHHHHDDHDVSHSTVKSKEELNEGTRKRKTKKAE) the chain is on the cytoplasmic side. Residues 259–286 (HGDHHHHHDDHDVSHSTVKSKEELNEGT) show a composition bias toward basic and acidic residues. Residues 259-295 (HGDHHHHHDDHDVSHSTVKSKEELNEGTRKRKTKKAE) form a disordered region.

It belongs to the TMEM38 family. In terms of assembly, homotrimer; conformation seems to be controled by binding to diacylglycerol (DAG).

It is found in the sarcoplasmic reticulum membrane. The protein resides in the nucleus membrane. The catalysed reaction is K(+)(in) = K(+)(out). With respect to regulation, channel activity is activated by a change of voltage within the sarcoplasmic reticulum lumen and blocked by luminal high Ca(2+) levels. Its function is as follows. Intracellular monovalent cation channel required for maintenance of rapid intracellular calcium release. Acts as a potassium counter-ion channel that functions in synchronization with calcium release from intracellular stores. Opened by a change of voltage within the sarcoplasmic reticulum lumen. In Xenopus tropicalis (Western clawed frog), this protein is Trimeric intracellular cation channel type A (tmem38a).